A 740-amino-acid polypeptide reads, in one-letter code: Ion-translocating oxidoreductase complex subunit C (740 aa).

4Fe-4S ferredoxin-type domains are found at residues 369 to 397 (GEPQEEQSCIRCSACADACPADLLPQQLY) and 407 to 436 (KATTHNIADCIECGACAWVCPSNIPLVQYF). The [4Fe-4S] cluster site is built by C377, C380, C383, C387, C416, C419, C422, and C426. A disordered region spans residues 602 to 716 (KLEQQQANAE…EPEEQVDPRK (115 aa)).

The protein belongs to the 4Fe4S bacterial-type ferredoxin family. RnfC subfamily. In terms of assembly, the complex is composed of six subunits: RsxA, RsxB, RsxC, RsxD, RsxE and RsxG. The cofactor is [4Fe-4S] cluster.

The protein localises to the cell inner membrane. Part of a membrane-bound complex that couples electron transfer with translocation of ions across the membrane. Required to maintain the reduced state of SoxR. The polypeptide is Ion-translocating oxidoreductase complex subunit C (Escherichia coli O139:H28 (strain E24377A / ETEC)).